A 1706-amino-acid polypeptide reads, in one-letter code: Bifunctional hemolysin/adenylate cyclase (1706 aa).

The tract at residues 1–399 is a, catalytic; the sequence is MQQSHQAGYA…RRPSLGAVER (399 aa). Residue 349–356 participates in ATP binding; sequence AYGVAGKS. Residues 367–405 are disordered; it reads GVPGGRSKSSPDVLETVPASPGLRRPSLGAVERQDSGYD. Residues 400–912 are b, Ala/Gly-rich; sequence QDSGYDSLDG…LKHSIKLEVI (513 aa). A required for interaction with CyaC region spans residues 500–698; sequence LSAAVFGLGE…SVVGAPVAVV (199 aa). 2 N6-palmitoyl lysine lipidation sites follow: lysine 860 and lysine 983. A c region spans residues 913–1656; that stretch reads GGDGDDVVLA…RDADHRVEAI (744 aa). Hemolysin-type calcium-binding repeat units follow at residues 1014 to 1031, 1032 to 1049, 1050 to 1067, 1155 to 1172, 1173 to 1190, 1279 to 1296, 1297 to 1314, 1315 to 1332, 1335 to 1352, 1411 to 1428, 1429 to 1446, 1447 to 1464, 1468 to 1484, 1537 to 1554, 1555 to 1572, 1573 to 1590, and 1603 to 1620; these read IGGAGNDSITGNAHDNFL, AGGAGDDRLDGGAGNDTL, VGGEGHNTVVGGAGDDVF, WGDDGNDTIHGRGGDDIL, RGGLGLDTLYGEDGNDIF, MGQGGDDTVRGGDGDDLL, FGGDGNDMLYGDAGNDTL, YGGLGDDTLEGGAGNDWF, TPAREHDVLRGGAGVDTV, TGDAQANVLRGAGGADVL, AGGEGDDVLLGGDGDDQL, SGDAGRDRLYGEAGDDWF, AANAGNLLDGGDGNDTV, IGDAGANVLNGLAGNDVL, SGGAGDDVLLGDEGSDLL, SGDAGNDDLFGGQGDDTY, and ESGGGHDTIRINAGADQL. Residues 1657–1706 are d, Asp/Gly-rich; it reads HAANQAIDPAGIEKLVEAMAQYPDPGAAAAAPPAARVPDTLMQSLAVNWR.

The protein in the N-terminal section; belongs to the adenylyl cyclase class-2 family. This sequence in the C-terminal section; belongs to the RTX prokaryotic toxin family. In terms of processing, released in a processed form. Post-translationally, palmitoylated at Lys-860 and Lys-983 by CyaC. The toxin only becomes active when modified in position Lys-983: palmitoylation is required for efficient membrane insertion and pore formation of the acylated Hemolysin chain.

The protein resides in the secreted. It is found in the host cell membrane. The catalysed reaction is ATP = 3',5'-cyclic AMP + diphosphate. Its activity is regulated as follows. Activated by host calmodulin. Functionally, bifunctional adenylate cyclase toxin-hemolysin that plays a crucial role in host colonization. It causes whooping cough by acting on mammalian cells by elevating cAMP-concentration and thus disrupts normal cell function. In terms of biological role, adenylate cyclase that is activated by host intracellular calmodulin and catalyzes un-regulated conversion of ATP to cAMP, thereby impairing microbicidal functions of immune effector cells and inducing apoptosis of lung macrophages. Its function is as follows. Hemolysin that forms small cation-selective membrane channels, leading to hemolytic activity. The hemolytic activity of CyaA is weak compared with that of the HlyA of E.coli. The polypeptide is Bifunctional hemolysin/adenylate cyclase (cya) (Bordetella bronchiseptica (strain ATCC BAA-588 / NCTC 13252 / RB50) (Alcaligenes bronchisepticus)).